The primary structure comprises 347 residues: Methylthioribose-1-phosphate isomerase (347 aa).

Residues R45–A47, R88, and Q197 each bind substrate. Catalysis depends on D238, which acts as the Proton donor. N248–K249 is a binding site for substrate.

Belongs to the eIF-2B alpha/beta/delta subunits family. MtnA subfamily.

The catalysed reaction is 5-(methylsulfanyl)-alpha-D-ribose 1-phosphate = 5-(methylsulfanyl)-D-ribulose 1-phosphate. Its pathway is amino-acid biosynthesis; L-methionine biosynthesis via salvage pathway; L-methionine from S-methyl-5-thio-alpha-D-ribose 1-phosphate: step 1/6. Functionally, catalyzes the interconversion of methylthioribose-1-phosphate (MTR-1-P) into methylthioribulose-1-phosphate (MTRu-1-P). This chain is Methylthioribose-1-phosphate isomerase, found in Nostoc sp. (strain PCC 7120 / SAG 25.82 / UTEX 2576).